Consider the following 287-residue polypeptide: Elongation factor Ts (287 aa).

Residues 80 to 83 (TDFL) are involved in Mg(2+) ion dislocation from EF-Tu.

Belongs to the EF-Ts family.

It is found in the cytoplasm. In terms of biological role, associates with the EF-Tu.GDP complex and induces the exchange of GDP to GTP. It remains bound to the aminoacyl-tRNA.EF-Tu.GTP complex up to the GTP hydrolysis stage on the ribosome. The chain is Elongation factor Ts from Pseudomonas fluorescens (strain Pf0-1).